Reading from the N-terminus, the 142-residue chain is MHLTADDKKHIKAIWPSVAAHGDKYGGEALHRMFMCAPKTKTYFPDFDFSEHSKHILAHGKKVSDALNEACNHLDNIAGCLSKLSDLHAYDLRVDPGNFPLLAHQILVVVAIHFPKQFDPATHKALDKFLVSVSNVLTSKYR.

Residues 2–142 (HLTADDKKHI…VSNVLTSKYR (141 aa)) enclose the Globin domain. Residues His59 and His88 each contribute to the heme b site.

This sequence belongs to the globin family. As to quaternary structure, heterotetramer of two alpha chains and two beta chains. In terms of tissue distribution, red blood cells.

Its function is as follows. Involved in oxygen transport from the lung to the various peripheral tissues. The protein is Hemoglobin subunit alpha (hba-A) of Xenopus tropicalis (Western clawed frog).